An 81-amino-acid chain; its full sequence is Large ribosomal subunit protein uL23 (81 aa).

It belongs to the universal ribosomal protein uL23 family. Part of the 50S ribosomal subunit. Contacts protein L29.

Functionally, binds to 23S rRNA. One of the proteins that surrounds the polypeptide exit tunnel on the outside of the ribosome. This chain is Large ribosomal subunit protein uL23, found in Saccharolobus solfataricus (strain ATCC 35092 / DSM 1617 / JCM 11322 / P2) (Sulfolobus solfataricus).